Reading from the N-terminus, the 170-residue chain is ATP synthase subunit b (170 aa).

A helical membrane pass occupies residues 4-24; it reads ILLLGLALAPVALFASQGAVE.

Belongs to the ATPase B chain family. As to quaternary structure, F-type ATPases have 2 components, F(1) - the catalytic core - and F(0) - the membrane proton channel. F(1) has five subunits: alpha(3), beta(3), gamma(1), delta(1), epsilon(1). F(0) has three main subunits: a(1), b(2) and c(10-14). The alpha and beta chains form an alternating ring which encloses part of the gamma chain. F(1) is attached to F(0) by a central stalk formed by the gamma and epsilon chains, while a peripheral stalk is formed by the delta and b chains.

The protein resides in the cell inner membrane. F(1)F(0) ATP synthase produces ATP from ADP in the presence of a proton or sodium gradient. F-type ATPases consist of two structural domains, F(1) containing the extramembraneous catalytic core and F(0) containing the membrane proton channel, linked together by a central stalk and a peripheral stalk. During catalysis, ATP synthesis in the catalytic domain of F(1) is coupled via a rotary mechanism of the central stalk subunits to proton translocation. Its function is as follows. Component of the F(0) channel, it forms part of the peripheral stalk, linking F(1) to F(0). The sequence is that of ATP synthase subunit b from Aliarcobacter butzleri (strain RM4018) (Arcobacter butzleri).